The following is a 483-amino-acid chain: Glycogen synthase kinase-3 alpha (483 aa).

The segment covering 1 to 15 (MSGGGPSGGGPGGSG) has biased composition (gly residues). Residues 1–96 (MSGGGPSGGG…PPPGVKLGRD (96 aa)) are disordered. Ser2 carries the N-acetylserine modification. A Phosphoserine modification is found at Ser2. The residue at position 21 (Ser21) is a Phosphoserine; by PKB/AKT1. Over residues 25–82 (PGGGGGGGGGGPGGSASGPGGTGGGKASVGAMGGGVGASSSGGGPGGSGGGGSGGPGA) the composition is skewed to gly residues. 3 positions are modified to phosphoserine: Ser72, Ser77, and Ser97. Residues 119 to 403 (YTDIKVIGNG…PLEACAHSFF (285 aa)) form the Protein kinase domain. Residues 125–133 (IGNGSFGVV) and Lys148 each bind ATP. The active-site Proton acceptor is the Asp244. The residue at position 279 (Tyr279) is a Phosphotyrosine. The segment at 449–483 (AGTTTLTPSSQALTETPTSSDWQSTDATPTLTNSS) is disordered.

The protein belongs to the protein kinase superfamily. CMGC Ser/Thr protein kinase family. GSK-3 subfamily. In terms of assembly, monomer. Interacts with ARRB2. Interacts with AXIN1 and CTNNB1/beta-catenin. Interacts with CTNND2. Interacts with LMBR1L. Interacts with DDX3X. Interacts with TNFRSF10B. Interacts with RICTOR; the interaction results in phosphorylation of RICTOR at 'Thr-1695' by GSK3A which facilitates FBXW7-mediated ubiquitination and subsequent degradation of RICTOR. As to quaternary structure, (Microbial infection) Interacts with M.tuberculosis PtpA. Post-translationally, phosphorylated by AKT1 at Ser-21: upon insulin-mediated signaling, the activated PKB/AKT1 protein kinase phosphorylates and deactivates GSK3A, resulting in the dephosphorylation and activation of GYS1. Activated by phosphorylation at Tyr-279. (Microbial infection) Dephosphorylated at Tyr-279 by M.tuberculosis PtpA, which leads to prevention of apoptosis during early stages of microbial infection.

It carries out the reaction L-seryl-[tau protein] + ATP = O-phospho-L-seryl-[tau protein] + ADP + H(+). The enzyme catalyses L-threonyl-[tau protein] + ATP = O-phospho-L-threonyl-[tau protein] + ADP + H(+). It catalyses the reaction L-seryl-[protein] + ATP = O-phospho-L-seryl-[protein] + ADP + H(+). The catalysed reaction is L-threonyl-[protein] + ATP = O-phospho-L-threonyl-[protein] + ADP + H(+). With respect to regulation, activated by phosphorylation at Tyr-279. In response to insulin, inhibited by phosphorylation at Ser-21 by PKB/AKT1; phosphorylation at this site causes a conformational change, preventing access of substrates to the active site. Inhibited by lithium. Its function is as follows. Constitutively active protein kinase that acts as a negative regulator in the hormonal control of glucose homeostasis, Wnt signaling and regulation of transcription factors and microtubules, by phosphorylating and inactivating glycogen synthase (GYS1 or GYS2), CTNNB1/beta-catenin, APC and AXIN1. Requires primed phosphorylation of the majority of its substrates. Contributes to insulin regulation of glycogen synthesis by phosphorylating and inhibiting GYS1 activity and hence glycogen synthesis. Regulates glycogen metabolism in liver, but not in muscle. May also mediate the development of insulin resistance by regulating activation of transcription factors. In Wnt signaling, regulates the level and transcriptional activity of nuclear CTNNB1/beta-catenin. Facilitates amyloid precursor protein (APP) processing and the generation of APP-derived amyloid plaques found in Alzheimer disease. May be involved in the regulation of replication in pancreatic beta-cells. Is necessary for the establishment of neuronal polarity and axon outgrowth. Through phosphorylation of the anti-apoptotic protein MCL1, may control cell apoptosis in response to growth factors deprivation. Acts as a regulator of autophagy by mediating phosphorylation of KAT5/TIP60 under starvation conditions which activates KAT5/TIP60 acetyltransferase activity and promotes acetylation of key autophagy regulators, such as ULK1 and RUBCNL/Pacer. Negatively regulates extrinsic apoptotic signaling pathway via death domain receptors. Promotes the formation of an anti-apoptotic complex, made of DDX3X, BRIC2 and GSK3B, at death receptors, including TNFRSF10B. The anti-apoptotic function is most effective with weak apoptotic signals and can be overcome by stronger stimulation. Phosphorylates mTORC2 complex component RICTOR at 'Thr-1695' which facilitates FBXW7-mediated ubiquitination and subsequent degradation of RICTOR. The sequence is that of Glycogen synthase kinase-3 alpha (GSK3A) from Homo sapiens (Human).